The primary structure comprises 80 residues: Spermatid-specific protein S2 (80 aa).

Basic residues predominate over residues 1–36; it reads VKSRYHQRQYRARKRYAKARRTKKPKRRPKPPRKLR. The tract at residues 1–44 is disordered; it reads VKSRYHQRQYRARKRYAKARRTKKPKRRPKPPRKLRYAPSKKQP.

The protein localises to the nucleus. It is found in the chromosome. Functionally, involved in nuclear basic protein transition: histones are replaced by spermatid specific proteins which are themselves replaced by protamines in late spermatids. This is Spermatid-specific protein S2 from Scyliorhinus canicula (Small-spotted catshark).